Consider the following 71-residue polypeptide: Vitellogenin-B2 (71 aa).

Positions 1-15 (MRGIILALLLALAGC) are cleaved as a signal peptide. The 48-residue stretch at 24–71 (FSESKTYVYNYEGIILNGIPENGLARSGIKLNCKVELSGYAQRSYMLK) folds into the Vitellogenin domain.

Produced by the liver, secreted into the blood and then sequestered by receptor mediated endocytosis into growing oocytes, where it is generally cleaved, giving rise to the respective yolk components.

Its function is as follows. Precursor of the major egg-yolk proteins that are sources of nutrients during early development of oviparous organisms. The protein is Vitellogenin-B2 of Xenopus laevis (African clawed frog).